Reading from the N-terminus, the 668-residue chain is Metal reductase (668 aa).

FMN-binding positions include 23–25, Gly-57, Gln-98, Arg-216, Arg-290, and 312–313; these read PMH and AR. [4Fe-4S] cluster is bound by residues Cys-336 and Cys-339. Gln-341 is a binding site for FAD. 2 residues coordinate [4Fe-4S] cluster: Cys-343 and Cys-355. FAD-binding residues include Ala-386, Glu-405, Gln-413, Arg-423, and Ala-450.

The protein in the N-terminal section; belongs to the NADH:flavin oxidoreductase/NADH oxidase family. In terms of assembly, homotetramer. The cofactor is FMN. It depends on FAD as a cofactor. Requires [4Fe-4S] cluster as cofactor.

It is found in the cytoplasm. Its function is as follows. Metal reductase able to reduce Fe(III)-chelates to Fe(II)-chelates, as well as soluble Cr(VI) and U(VI), using NADH as electron donor. Cannot use NADPH as an electron donor. Is unable to reduce riboflavin and FMN with NADH as electron donor. May have an in vivo role in metal reduction in D.reducens, which is an organism capable of reducing contaminant heavy metals and radionuclides. The protein is Metal reductase of Desulforamulus reducens (strain ATCC BAA-1160 / DSM 100696 / MI-1) (Desulfotomaculum reducens).